We begin with the raw amino-acid sequence, 409 residues long: Peptide chain release factor subunit 1 (409 aa).

It belongs to the eukaryotic release factor 1 family. As to quaternary structure, heterodimer of two subunits, one of which binds GTP.

It is found in the cytoplasm. Functionally, directs the termination of nascent peptide synthesis (translation) in response to the termination codons UAA, UAG and UGA. This Methanopyrus kandleri (strain AV19 / DSM 6324 / JCM 9639 / NBRC 100938) protein is Peptide chain release factor subunit 1.